The following is a 157-amino-acid chain: MKKIILAGGCFWGVEEFLSRINGVVSTEVGYANGRTENPTYEDICTKNTYFAEVCLVNYDENIISLKELLAKFWTIIDPTSLNKQGNDVGSQYRTGIYYVDSSDLEDILNSKEELQKSYSKKIVTEVKPLENYYKAEEYHQKYLKKNPNGYCHIKLD.

Residue Cys-10 is part of the active site.

Belongs to the MsrA Met sulfoxide reductase family.

The enzyme catalyses L-methionyl-[protein] + [thioredoxin]-disulfide + H2O = L-methionyl-(S)-S-oxide-[protein] + [thioredoxin]-dithiol. It carries out the reaction [thioredoxin]-disulfide + L-methionine + H2O = L-methionine (S)-S-oxide + [thioredoxin]-dithiol. Functionally, has an important function as a repair enzyme for proteins that have been inactivated by oxidation. Catalyzes the reversible oxidation-reduction of methionine sulfoxide in proteins to methionine. The polypeptide is Peptide methionine sulfoxide reductase MsrA (Clostridium perfringens (strain 13 / Type A)).